The following is a 134-amino-acid chain: ATP synthase epsilon chain, chloroplastic (134 aa).

The protein belongs to the ATPase epsilon chain family. In terms of assembly, F-type ATPases have 2 components, CF(1) - the catalytic core - and CF(0) - the membrane proton channel. CF(1) has five subunits: alpha(3), beta(3), gamma(1), delta(1), epsilon(1). CF(0) has three main subunits: a, b and c.

The protein resides in the plastid. It is found in the chloroplast thylakoid membrane. In terms of biological role, produces ATP from ADP in the presence of a proton gradient across the membrane. The sequence is that of ATP synthase epsilon chain, chloroplastic from Spinacia oleracea (Spinach).